Here is a 614-residue protein sequence, read N- to C-terminus: Protein NRT1/ PTR FAMILY 7.3 (614 aa).

The next 2 membrane-spanning stretches (helical) occupy residues 41 to 61 (WVAG…FFGV) and 87 to 107 (WTGT…SYWG). Phosphothreonine is present on Thr-111. A run of 9 helical transmembrane segments spans residues 114-134 (IFQV…YMFL), 152-172 (MMEI…YGGY), 196-216 (IAFF…SNTI), 226-246 (WALG…LFLV), 355-375 (PIWL…SLFV), 390-410 (IPPA…IFLY), 435-455 (MGIG…VECY), 515-535 (LCMM…TMVV), and 559-579 (FYFL…ACAK). The tract at residues 592-614 (MQDMSDDDYDTESEEEREKDSKV) is disordered. Acidic residues predominate over residues 593–606 (QDMSDDDYDTESEE).

It belongs to the major facilitator superfamily. Proton-dependent oligopeptide transporter (POT/PTR) (TC 2.A.17) family. As to expression, high expression in roots. Barely detected in shoots. Expressed in root pericycle cells close to the xylem.

The protein resides in the cell membrane. In terms of biological role, low-affinity proton-dependent bidirectional nitrate transporter. Involved in nitrate loading into xylem and not in nitrate uptake. Not involved in histidine or dipeptides transport. The polypeptide is Protein NRT1/ PTR FAMILY 7.3 (NPF7.3) (Arabidopsis thaliana (Mouse-ear cress)).